Consider the following 233-residue polypeptide: Ribonuclease HII (233 aa).

The region spanning 26–215 is the RNase H type-2 domain; sequence QLVAGIDEVG…VRASEGEGLE (190 aa). 3 residues coordinate a divalent metal cation: D32, E33, and D124. Residues 211 to 233 are disordered; it reads GEGLETAAGRQSSEGKKGRRPRG.

This sequence belongs to the RNase HII family. Mn(2+) serves as cofactor. Requires Mg(2+) as cofactor.

It localises to the cytoplasm. It carries out the reaction Endonucleolytic cleavage to 5'-phosphomonoester.. In terms of biological role, endonuclease that specifically degrades the RNA of RNA-DNA hybrids. The sequence is that of Ribonuclease HII from Syntrophobacter fumaroxidans (strain DSM 10017 / MPOB).